An 821-amino-acid chain; its full sequence is DNA replication licensing factor MCM6 (821 aa).

Met1 carries the post-translational modification N-acetylmethionine. Ser13, Ser219, and Ser271 each carry phosphoserine. Thr278 is modified (phosphothreonine). An MCM domain is found at 346 to 553 (LYHNLCTSLF…TDYAIARRIV (208 aa)). The ATP site is built by His359, Ser399, Thr400, Ala401, Lys402, Ser403, and Asn504. Residues 528–531 (SRFD) carry the Arginine finger motif. Residues Arg619 and Glu622 each coordinate ADP. Residue Lys643 is modified to N6-acetyllysine. The tract at residues 676–708 (TDEGQGGVNGHADSPAPVNRFNGSSEDASQETV) is disordered. 3 positions are modified to phosphoserine: Ser689, Ser704, and Ser762. Residues 696 to 708 (FNGSSEDASQETV) show a composition bias toward polar residues. Thr791 is subject to Phosphothreonine.

Belongs to the MCM family. Component of the MCM2-7 complex. The complex forms a toroidal hexameric ring with the proposed subunit order MCM2-MCM6-MCM4-MCM7-MCM3-MCM5. Component of the CMG helicase complex, a hexameric ring of related MCM2-7 subunits stabilized by CDC45 and the tetrameric GINS complex. May interact with MCM10. Interacts with TIPIN. Interacts with CDT1. Interacts with MCMBP. Interacts with DDI2. O-glycosylated (O-GlcNAcylated), in a cell cycle-dependent manner.

It localises to the nucleus. The protein resides in the chromosome. It carries out the reaction ATP + H2O = ADP + phosphate + H(+). Acts as a component of the MCM2-7 complex (MCM complex) which is the replicative helicase essential for 'once per cell cycle' DNA replication initiation and elongation in eukaryotic cells. Core component of CDC45-MCM-GINS (CMG) helicase, the molecular machine that unwinds template DNA during replication, and around which the replisome is built. The active ATPase sites in the MCM2-7 ring are formed through the interaction surfaces of two neighboring subunits such that a critical structure of a conserved arginine finger motif is provided in trans relative to the ATP-binding site of the Walker A box of the adjacent subunit. The six ATPase active sites, however, are likely to contribute differentially to the complex helicase activity. This Mus musculus (Mouse) protein is DNA replication licensing factor MCM6 (Mcm6).